A 138-amino-acid chain; its full sequence is Cysteine desulfuration protein SufE (138 aa).

Residue Cys51 is the Cysteine persulfide intermediate of the active site.

The protein belongs to the SufE family. As to quaternary structure, homodimer. Interacts with SufS.

It is found in the cytoplasm. The protein operates within cofactor biosynthesis; iron-sulfur cluster biosynthesis. In terms of biological role, participates in cysteine desulfuration mediated by SufS. Cysteine desulfuration mobilizes sulfur from L-cysteine to yield L-alanine and constitutes an essential step in sulfur metabolism for biosynthesis of a variety of sulfur-containing biomolecules. Functions as a sulfur acceptor for SufS, by mediating the direct transfer of the sulfur atom from the S-sulfanylcysteine of SufS, an intermediate product of cysteine desulfuration process. This chain is Cysteine desulfuration protein SufE, found in Escherichia coli O6:K15:H31 (strain 536 / UPEC).